The following is a 116-amino-acid chain: Nitrogenase iron-iron protein delta chain (116 aa).

As to quaternary structure, hexamer of two alpha, two beta, and two delta chains. Requires iron-sulfur cluster as cofactor.

It carries out the reaction N2 + 8 reduced [2Fe-2S]-[ferredoxin] + 16 ATP + 16 H2O = H2 + 8 oxidized [2Fe-2S]-[ferredoxin] + 2 NH4(+) + 16 ADP + 16 phosphate + 6 H(+). The key enzymatic reactions in nitrogen fixation are catalyzed by the nitrogenase complex, which has 2 components: the iron protein (component 2) and a component 1 which is either a molybdenum-iron protein, a vanadium-iron, or an iron-iron protein. The polypeptide is Nitrogenase iron-iron protein delta chain (anfG) (Clostridium pasteurianum).